A 1083-amino-acid polypeptide reads, in one-letter code: FACT complex subunit spt16 (1083 aa).

Ser-437 bears the Phosphoserine mark. The stretch at 466–504 (LESKLRNEINTEEKRKEHQRELAQQLNERAKDRLARQGN) forms a coiled coil. The tract at residues 923–1083 (FEQGGWTFLD…NGHKSKKSRH (161 aa)) is disordered. Acidic residues predominate over residues 935-987 (SGSEGENETAESEEDEAYNPTDAESDEESDEDSEYSEASEDSEESDEDLGSDE). Over residues 988-1023 (ESGKDWSDLEREAAEEDRNHDYAADDKPRNGKFDSK) the composition is skewed to basic and acidic residues. Positions 1024-1033 (KHGKSSKHSP) are enriched in basic residues. Residues 1058–1076 (SSKDKDRKRSRDDSRDNGH) are compositionally biased toward basic and acidic residues.

It belongs to the peptidase M24 family. SPT16 subfamily. In terms of assembly, component of the FACT complex, a stable heterodimer of dre4/spt16 and Ssrp. Interacts with TRL/GAGA.

The protein resides in the nucleus. It is found in the chromosome. In terms of biological role, component of the FACT complex, a general chromatin factor that acts to reorganize nucleosomes. The FACT complex is involved in multiple processes that require DNA as a template such as mRNA elongation, DNA replication and DNA repair. During transcription elongation the FACT complex acts as a histone chaperone that both destabilizes and restores nucleosomal structure. It facilitates the passage of RNA polymerase II and transcription by promoting the dissociation of one histone H2A-H2B dimer from the nucleosome, then subsequently promotes the reestablishment of the nucleosome following the passage of RNA polymerase II. The FACT complex is required for expression of Hox genes. The sequence is that of FACT complex subunit spt16 (dre4) from Drosophila melanogaster (Fruit fly).